Consider the following 241-residue polypeptide: Small ribosomal subunit protein uS2 (241 aa).

It belongs to the universal ribosomal protein uS2 family.

The chain is Small ribosomal subunit protein uS2 from Escherichia coli (strain 55989 / EAEC).